Reading from the N-terminus, the 398-residue chain is Phosphoglycerate kinase (398 aa).

Substrate is bound by residues 23–25 (DLN), arginine 38, 61–64 (HFGR), arginine 120, and arginine 153. Residues lysine 203, glutamate 325, and 355–358 (GGDT) each bind ATP.

This sequence belongs to the phosphoglycerate kinase family. Monomer.

The protein localises to the cytoplasm. It carries out the reaction (2R)-3-phosphoglycerate + ATP = (2R)-3-phospho-glyceroyl phosphate + ADP. Its pathway is carbohydrate degradation; glycolysis; pyruvate from D-glyceraldehyde 3-phosphate: step 2/5. This chain is Phosphoglycerate kinase, found in Sphingopyxis alaskensis (strain DSM 13593 / LMG 18877 / RB2256) (Sphingomonas alaskensis).